A 476-amino-acid polypeptide reads, in one-letter code: Glutamyl-tRNA(Gln) amidotransferase subunit A (476 aa).

Active-site charge relay system residues include K76 and S151. S175 acts as the Acyl-ester intermediate in catalysis.

The protein belongs to the amidase family. GatA subfamily. Heterotrimer of A, B and C subunits.

The catalysed reaction is L-glutamyl-tRNA(Gln) + L-glutamine + ATP + H2O = L-glutaminyl-tRNA(Gln) + L-glutamate + ADP + phosphate + H(+). Allows the formation of correctly charged Gln-tRNA(Gln) through the transamidation of misacylated Glu-tRNA(Gln) in organisms which lack glutaminyl-tRNA synthetase. The reaction takes place in the presence of glutamine and ATP through an activated gamma-phospho-Glu-tRNA(Gln). This Chlorobium phaeobacteroides (strain DSM 266 / SMG 266 / 2430) protein is Glutamyl-tRNA(Gln) amidotransferase subunit A.